A 397-amino-acid chain; its full sequence is Elongation factor Tu 2 (397 aa).

Positions 10–206 (KPHVNIGTIG…AIDTWIPEPV (197 aa)) constitute a tr-type G domain. The interval 19–26 (GHVDHGKT) is G1. Residue 19–26 (GHVDHGKT) coordinates GTP. Thr-26 serves as a coordination point for Mg(2+). Residues 61 to 65 (GITIS) are G2. Residues 82–85 (DCPG) form a G3 region. Residues 82-86 (DCPGH) and 137-140 (NKCD) contribute to the GTP site. Positions 137–140 (NKCD) are G4. Positions 175–177 (SAL) are G5.

It belongs to the TRAFAC class translation factor GTPase superfamily. Classic translation factor GTPase family. EF-Tu/EF-1A subfamily. In terms of assembly, monomer.

The protein localises to the cytoplasm. The enzyme catalyses GTP + H2O = GDP + phosphate + H(+). Its function is as follows. GTP hydrolase that promotes the GTP-dependent binding of aminoacyl-tRNA to the A-site of ribosomes during protein biosynthesis. This chain is Elongation factor Tu 2, found in Alkaliphilus metalliredigens (strain QYMF).